Reading from the N-terminus, the 103-residue chain is MQNQKIRIRLKAFDYRLIDQSAAEIVDTAKRTGAIVRGPVPLPTRIQRFDILRSPHVNKTSRDQLEIRTHQRLMDIVDPTDKTVDALMKLDLPAGVDVEIKLQ.

It belongs to the universal ribosomal protein uS10 family. In terms of assembly, part of the 30S ribosomal subunit.

Functionally, involved in the binding of tRNA to the ribosomes. The chain is Small ribosomal subunit protein uS10 from Paraburkholderia xenovorans (strain LB400).